Here is a 360-residue protein sequence, read N- to C-terminus: MLLLLAEYLQQFHKGFAVFQYLTLRGILGVLTALSLALWLGPWMIRTLQIRQIGQAVRNDGPQSHLSKSGTPTMGGALILSAIAISTLLWADLTNRYVWVVLIVTLAFGAIGWVDDYRKVIEKNSRGLPSRWKYFWQSVFGLAAAIFLYKTAPTSVETTLIIPMLKDLAIPLGAGFIVLTYFVIVGSSNAVNLTDGLDGLAIMPTVMVGGALGIFCYLSGNVKFAEYLLIPYVPGAGELIVFCGALIGAGLGFLWFNTYPAQVFMGDVGALALGAALGTIAVIVRQEVVLFIMGGVFVMETLSVVIQVASFKLTGKRVFRMAPIHHHFELKGWPEPRVIVRFWIITVILVLIGLATLKLR.

The next 10 membrane-spanning stretches (helical) occupy residues 25–45, 73–93, 97–117, 134–154, 168–188, 199–219, 236–256, 263–283, 288–308, and 338–358; these read RGIL…PWMI, TMGG…WADL, YVWV…VDDY, YFWQ…TAPT, LAIP…VGSS, GLAI…CYLS, AGEL…FLWF, VFMG…IAVI, VVLF…VIQV, and VIVR…ATLK.

It belongs to the glycosyltransferase 4 family. MraY subfamily. Mg(2+) serves as cofactor.

It is found in the cell inner membrane. It catalyses the reaction UDP-N-acetyl-alpha-D-muramoyl-L-alanyl-gamma-D-glutamyl-meso-2,6-diaminopimeloyl-D-alanyl-D-alanine + di-trans,octa-cis-undecaprenyl phosphate = di-trans,octa-cis-undecaprenyl diphospho-N-acetyl-alpha-D-muramoyl-L-alanyl-D-glutamyl-meso-2,6-diaminopimeloyl-D-alanyl-D-alanine + UMP. The protein operates within cell wall biogenesis; peptidoglycan biosynthesis. In terms of biological role, catalyzes the initial step of the lipid cycle reactions in the biosynthesis of the cell wall peptidoglycan: transfers peptidoglycan precursor phospho-MurNAc-pentapeptide from UDP-MurNAc-pentapeptide onto the lipid carrier undecaprenyl phosphate, yielding undecaprenyl-pyrophosphoryl-MurNAc-pentapeptide, known as lipid I. This chain is Phospho-N-acetylmuramoyl-pentapeptide-transferase, found in Pseudomonas entomophila (strain L48).